We begin with the raw amino-acid sequence, 1339 residues long: DNA-directed RNA polymerase subunit beta'' (1339 aa).

Zn(2+) contacts are provided by Cys226, Cys299, Cys306, and Cys309.

It belongs to the RNA polymerase beta' chain family. RpoC2 subfamily. As to quaternary structure, in plastids the minimal PEP RNA polymerase catalytic core is composed of four subunits: alpha, beta, beta', and beta''. When a (nuclear-encoded) sigma factor is associated with the core the holoenzyme is formed, which can initiate transcription. The cofactor is Zn(2+).

It is found in the plastid. Its subcellular location is the chloroplast. It catalyses the reaction RNA(n) + a ribonucleoside 5'-triphosphate = RNA(n+1) + diphosphate. Its function is as follows. DNA-dependent RNA polymerase catalyzes the transcription of DNA into RNA using the four ribonucleoside triphosphates as substrates. This is DNA-directed RNA polymerase subunit beta'' from Cycas taitungensis (Prince sago).